The primary structure comprises 145 residues: Hemoglobin subunit beta (145 aa).

The 145-residue stretch at 1–145 (MLTAEEKAAV…VANALAHRYH (145 aa)) folds into the Globin domain. Position 11 is a phosphothreonine (Thr-11). An N6-acetyllysine modification is found at Lys-58. Heme b is bound at residue His-62. Lys-81 bears the N6-acetyllysine mark. His-91 lines the heme b pocket. S-nitrosocysteine is present on Cys-92.

It belongs to the globin family. Heterotetramer of two alpha chains and two beta chains. As to expression, red blood cells.

In terms of biological role, involved in oxygen transport from the lung to the various peripheral tissues. The polypeptide is Hemoglobin subunit beta (HBB) (Alces alces alces (European moose)).